We begin with the raw amino-acid sequence, 112 residues long: Putative pterin-4-alpha-carbinolamine dehydratase (112 aa).

It belongs to the pterin-4-alpha-carbinolamine dehydratase family.

The enzyme catalyses (4aS,6R)-4a-hydroxy-L-erythro-5,6,7,8-tetrahydrobiopterin = (6R)-L-erythro-6,7-dihydrobiopterin + H2O. The chain is Putative pterin-4-alpha-carbinolamine dehydratase from Hahella chejuensis (strain KCTC 2396).